Consider the following 197-residue polypeptide: MLPLLQLVPAKLLNSSCSLEKTLQCSCSFHGIPTPSVQWWMGGVPVGVDGMDGSLQVTSTMLGPWANSTISLTEEPEMGMRLLCEGKNQNGTHALSILLMSRKSSLAAQAFVKGLIQGAIYAGIVIALLFLCLLPLIVKHIRKKQAKKAAAIRAKKSSKVRASQELEMSLKPEEPGKPVVATFSESRILEKQDKRAS.

A helical transmembrane segment spans residues 118–138 (GAIYAGIVIALLFLCLLPLIV). Residues 160-179 (VRASQELEMSLKPEEPGKPV) are disordered. Basic and acidic residues predominate over residues 162 to 176 (ASQELEMSLKPEEPG).

The protein resides in the membrane. The sequence is that of SIGLEC family-like protein 1 (SIGLECL1) from Homo sapiens (Human).